The primary structure comprises 479 residues: Type I inositol polyphosphate 5-phosphatase 8 (479 aa).

2 catalytic regions span residues 300–315 and 379–394; these read DKVI…LRAS and KRRT…WKGD.

This sequence belongs to the inositol polyphosphate 5-phosphatase family.

This Arabidopsis thaliana (Mouse-ear cress) protein is Type I inositol polyphosphate 5-phosphatase 8.